The following is a 292-amino-acid chain: Manganese transport system membrane protein MntC (292 aa).

8 helical membrane passes run 20 to 40 (ALTA…FIIL), 58 to 78 (VVIA…TGVI), 96 to 116 (SAIG…ITGM), 137 to 157 (TDLW…ILFY), 168 to 188 (VMAQ…MLLL), 190 to 210 (LVTV…MLIT), 226 to 246 (LCLA…FSVI), and 249 to 269 (VASG…AFFF).

It belongs to the ABC-3 integral membrane protein family.

It localises to the cell membrane. In terms of biological role, this protein is probably a component of a manganese permease, a binding protein-dependent, ATP-driven transport system. In Halalkalibacterium halodurans (strain ATCC BAA-125 / DSM 18197 / FERM 7344 / JCM 9153 / C-125) (Bacillus halodurans), this protein is Manganese transport system membrane protein MntC (mntC).